The following is a 360-amino-acid chain: Diacylglycerol O-acyltransferase 3 (360 aa).

The tract at residues 153–182 (KAKAMKKMTEMDSESSSSSESSDSDCDKGK) is disordered. [2Fe-2S] cluster-binding residues include cysteine 265, cysteine 270, cysteine 298, and cysteine 302.

Belongs to the diacylglycerol acyltransferase family. The cofactor is [2Fe-2S] cluster.

The catalysed reaction is an acyl-CoA + a 1,2-diacyl-sn-glycerol = a triacyl-sn-glycerol + CoA. The protein operates within glycerolipid metabolism; triacylglycerol biosynthesis. Functionally, involved in triacylglycerol (TAG) biosynthesis. Catalyzes the acylation of the sn-3 hydroxy group of sn-1,2-diacylglycerol using acyl-CoA. May preferentially use linolenoyl-CoA as substrate and to a lesser extent linoleoyl-CoA. May contribute to the active recycling of linoleate and linolenate into TAG when seed oil breakdown is blocked. The chain is Diacylglycerol O-acyltransferase 3 from Arabidopsis thaliana (Mouse-ear cress).